The following is a 179-amino-acid chain: Small ribosomal subunit protein uS5 (179 aa).

The region spanning 22–85 (MIEKLVAVNR…EYARKRMANV (64 aa)) is the S5 DRBM domain.

Belongs to the universal ribosomal protein uS5 family. In terms of assembly, part of the 30S ribosomal subunit. Contacts proteins S4 and S8.

Its function is as follows. With S4 and S12 plays an important role in translational accuracy. Functionally, located at the back of the 30S subunit body where it stabilizes the conformation of the head with respect to the body. The chain is Small ribosomal subunit protein uS5 from Xylella fastidiosa (strain M12).